The chain runs to 260 residues: MFKKYSIFIAALTAFLLVAGCSSNQSSTDSEKKVTLTISAAASAQDALEEIQKNYEKDHQHITIQDNYGSSGALQKQISQGAGADLFFSAAEDKFKKLVDDGDIAKKDSTELVGNEIVLVVPKNGDSPVTSFSNLAESEKIALGTPESVPAGAYGKESLTKLSLWDKVKDKIVYGKDVRQVLSYVETGNVDAGVVYKTDALVSKKVNIVDEAKADTHSPIVYPLGIVKDTKHRKEAKEFYEYLQSDEAMKVFEKYGFTAE.

The N-terminal stretch at 1–20 is a signal peptide; it reads MFKKYSIFIAALTAFLLVAG. Cys21 carries the N-palmitoyl cysteine lipid modification. Cys21 carries S-diacylglycerol cysteine lipidation. Ser43, Ser71, Ala151, Val178, and Tyr196 together coordinate molybdate.

The protein belongs to the bacterial solute-binding protein ModA family.

The protein localises to the cell membrane. In Bacillus subtilis (strain 168), this protein is Putative ABC transporter substrate-binding lipoprotein YvgL (yvgL).